An 84-amino-acid polypeptide reads, in one-letter code: Omega-conotoxin-like ArMKLT1-02 (84 aa).

Residues 1–22 (MKVTCMMIVAVLFLTAWTFVTA) form the signal peptide. Residues 23 to 51 (DDSISALEDLFAKAHDKMENSEASPLNER) constitute a propeptide that is removed on maturation. Cystine bridges form between Cys-53-Cys-71, Cys-60-Cys-75, and Cys-70-Cys-79.

It belongs to the conotoxin O1 superfamily. As to expression, expressed by the venom duct.

Its subcellular location is the secreted. In terms of biological role, omega-conotoxins act at presynaptic membranes, they bind and block voltage-gated calcium channels (Cav). The protein is Omega-conotoxin-like ArMKLT1-02 of Conus arenatus (Sand-dusted cone).